Here is a 365-residue protein sequence, read N- to C-terminus: Caffeic acid 3-O-methyltransferase 1 (365 aa).

Met130 to Leu136 contributes to the substrate binding site. The interval Ala162–Met180 is substrate binding. Residues Gly208, Asp231, Asp251, Met252, and Lys265 each coordinate S-adenosyl-L-methionine. Residue His269 is the Proton acceptor of the active site.

The protein belongs to the class I-like SAM-binding methyltransferase superfamily. Cation-independent O-methyltransferase family. COMT subfamily. As to quaternary structure, homodimer. The N-terminus is blocked. Xylem.

It catalyses the reaction (E)-caffeate + S-adenosyl-L-methionine = (E)-ferulate + S-adenosyl-L-homocysteine + H(+). It functions in the pathway aromatic compound metabolism; phenylpropanoid biosynthesis. In terms of biological role, catalyzes the conversion of caffeic acid to ferulic acid and of 5-hydroxyferulic acid to sinapic acid. The resulting products may subsequently be converted to the corresponding alcohols that are incorporated into lignins. In Populus tremuloides (Quaking aspen), this protein is Caffeic acid 3-O-methyltransferase 1 (OMT1).